Consider the following 381-residue polypeptide: Carbamoyl phosphate synthase small chain (381 aa).

Residues 1-192 (MSKPAILALE…SGYADVSQGD (192 aa)) are CPSase. S47, G244, and G246 together coordinate L-glutamine. The region spanning 196–381 (HVVAYDYGMK…RFVEMMRHRR (186 aa)) is the Glutamine amidotransferase type-1 domain. C272 serves as the catalytic Nucleophile. L-glutamine contacts are provided by L273, Q276, N314, G316, and F317. Active-site residues include H356 and E358.

Belongs to the CarA family. In terms of assembly, composed of two chains; the small (or glutamine) chain promotes the hydrolysis of glutamine to ammonia, which is used by the large (or ammonia) chain to synthesize carbamoyl phosphate. Tetramer of heterodimers (alpha,beta)4.

It catalyses the reaction hydrogencarbonate + L-glutamine + 2 ATP + H2O = carbamoyl phosphate + L-glutamate + 2 ADP + phosphate + 2 H(+). The catalysed reaction is L-glutamine + H2O = L-glutamate + NH4(+). It participates in amino-acid biosynthesis; L-arginine biosynthesis; carbamoyl phosphate from bicarbonate: step 1/1. The protein operates within pyrimidine metabolism; UMP biosynthesis via de novo pathway; (S)-dihydroorotate from bicarbonate: step 1/3. Small subunit of the glutamine-dependent carbamoyl phosphate synthetase (CPSase). CPSase catalyzes the formation of carbamoyl phosphate from the ammonia moiety of glutamine, carbonate, and phosphate donated by ATP, constituting the first step of 2 biosynthetic pathways, one leading to arginine and/or urea and the other to pyrimidine nucleotides. The small subunit (glutamine amidotransferase) binds and cleaves glutamine to supply the large subunit with the substrate ammonia. In Halomonas eurihalina, this protein is Carbamoyl phosphate synthase small chain.